A 3902-amino-acid polypeptide reads, in one-letter code: MDTPLSSSEISPRFSNTVPSSVSSMTPNADPSVIVGLACRVPGATNPSQLWENIVAQKDLQRKMPADRFNVDAFYHPDGTNKGTTNAKFGYFLDQDIGMFDAGFFRISGKEAEAMDPQQRLLLEVVYEALEDAGITLDEVNGSNTAVFCGSFTNDYNAMVTKDLEYYPKYTVTGTGNAILSNRISYFYNLHGPSVTIDTACSSSLNESDIAIVVGSALHFDPNVFITMTDLGMLSSDGRCRTFDSMGSGYVRGEGICAAVLKRRRDAVYNGDNIRAVVRASGVNHDGIKQGITLPNTNAQEKLIRRTYDLAGLDPNDTQYFEAHGTGTARGDPIEARAIGAVFGSTRSEPLYVGSVKSNIGHLEGASGLAGIIKATLALEESQIPPNMHFKRPNPEIKFDEWKIQVPQDIISWPASANGIRRASINSFGYGGTNAHVILDAYKPEDSEAELQAIPAISSSIPVDRPYLIPLSAHSTKAGALWEDKLTKYLSNEPIGRPAVSDLAVSLSTRRTMHGNRSFIIGKDMPTVLQGLEQPPSPAAAWTRPLKETPRLGFVFTGQGAQWFAMGRKLIQQSHLYRQTLERCDAVLQSLPDGPDWTVLEELLRTEEASRLKETRLSQPICTAMQLATVCLLKQWGIEPSAVVGHSSGEVAAAYAAGILTFENAMIAAYYRGLYMSSGVDGSMTTDGAMMAVGLTEAEAKKEFETYTGQICVAAVNSASSLTLSGDKDAIVRLRDSLVERKIFARLLQVAQAFHSHHMLPLAPKYEEALKNCAGFGTSPARVRMFSSVTARLARPGEMGAGYWTANMTGTVRFSDALTGILLNEEDEQNVDILVEIGPHPALKGPSRQVMNALKLNLPYLASLTRGVNDYESLLTLAGQLFQYGFPVDLIAVNSDHFLQRETGMIQSELHGKRLRDLPTYAWDHKRYWSETRPIREHRLRKQRHSILGARMPGIPERTPHWRNYLRLKEIPWLADHVIDGNAVFPAAGYFSMAIEAAVSMCAEDSVIKEIALRDLNVQSALLLSDSEEGTEVIMELRPATQSAKSKSALWYEFTIYSYGESKILNEHCSGLVSVETNALTLPMRWESSKTFDDLAKESQESIPAETLYDHLTALGLQYGPSFQLLTGDVQTGPGFALAGLDFQPSQFSVQAADLTIAHPTLLDASFHAIFPAIESALGRSLDEPLVPTFVRSFKVSGDFLACCRESREQKFQVTCFTRLPGPRVALSDLTVCSKESNKPLLQFNGLEVTALGSDKTDNSAGRSLFFRTRWQPAFTFLGPDHPAVAQKNISEILDIFAHQFPDTRILHVSDTVDGTRDVLKYLGGRSNERRRFHSITPVFQTQIALEEIDALSQEWPGLVEISEPEPNAYGLVVLSSDAADLDSRQFVKEGGFVLALGPHPQPEGLHDVFFTKDLAVWQKSTDNAQKPKQLSLILPSCPSQRTLDIADGMEMQHGSSVFVTRTSLAALSNEALQAEDIVVLANLDEDVLFEHSSSDQSTFLGIKRLLTAGGKNIVWVLEGGSMDAPKPEHAMIIGLARVARSENDQLRFVTLDLPRASTQETVVRHVWRLLDRSITEDEVAVRDNCIFIPRVEADDQLNSKLRNGTNSQPREEPLGAGRPLALKIGRVGLLETLVFEDDEQILDTQLADDEIEIEVKASAINFRDIAASMGIIDDYKLGDECAGIVTRIGAQVNPQDFQVGDRVAAWRPGQGAHKTIVRNPASLSYKLGDMSFVDAASLPCILTTAYYSLVHVAHLQPGETVLIHSAAGGVGQMAIQVAQYVGARVIATVGSQAKRSLLKSRYGLADDMIFNSRDDSFVRDVLDTTGGRGVDVILNSLAGKLLHATWSCVAPFGRFIEIGKRDIHENSKIDMDPFRRNVAFASVDLVTIFEKNKPLGARLLKECGTLVHKGHITPPETVTELPYSDAVKAFRLLQMGKHTGKVVLVPHAGDRVPVLPSTYRNQPLFKHEKTYLLVGGLGGLGRTLAEWMVRKNARRLAFLSRSGADKEEAKRTVEWLRERGVSVTVFKGDVSRYEDVERAVKAIDNLGGIFQAAMVLQDAPLENMSYQQWQICVEPKVKGTYNLHQATLGKQLDFFICFSSASGSIGSKGQANYSSANCYLDALMRHRREMGLAGTTMNCGMIVGIGAVAANQALLKVMMRSGYDGVNKEELLYQIEEAVLSDNNKKVSRRGVDLHQTITGINMTKADFYWCQKPLYRNLYNNHEFLGQTAIKQGTKSLASQLQGTKSVEERTTLVLSAFIEKVADVLSVSVDSIESANPLSAYGLDSIIAVEFRKWFSRSVGVEIALFDVLGAPSIFALVTKASGLITITTSNDDKAENVDNEGAKGNEDQEVETQQGQLNQPIPPAAAVGPVPMSSFQQRLWFIHNFGDDKTFLNLSITSYLEGNPDATILEKALNELVNRNAILRTGYTEGDEFAEQTVLDMPSISLERIDVSSKPSPTVSLQDVIQRRRAIELEIEEGEVVRPMLVRLSDDQHALVLICHHIAIDRGSAKSSLNQLTGIYDAIRQGRDLDMVPRPGVSYADFAVWHNRLLSSPSLQADLTFWKENLSGMPKTCKLLPFAKSERPLHDDLQRTVVSGILKKSLLNRMKRICSQSGATPFQFLLAAFRAFIFRYTEDSDLGILMIDGDRPHPDLEDVLGFFVNMTPIRCQDSCEGAFDQLLEATKTRTLEAMSHSKAPFDSIVDVVKAKKTTSHFPLAQIALNYQIHGTFPVYRTQDFNVHDVQSVDVPTACDMQLEALEHPERGLDLRLEYSSTLYGSGDMNRFFDNFVTFMSSLIRDHRQPIAEVNLCGALEIAHLEKNFWNTQFTQNPWGSVGVCQRIMENAAKQPEAVAIAASDGAAITYSELVERAQRVAASLKASGVTERQKICVLVDPGVDAVIALLAVLLTRSCYVALDSSFAVDRLAFMASDCGAGVLLFGPELQGLAETVASKSKSGLRLLDTKKAALCEDRFVGDLPSVNEDPFFIIYTSGSTGKPKGVVLSHANTQQMLASVGEYFRFTSDDRFLQQSSLCFDLSVVQIFSALTAGARVCVAKHDIRKDPAALAAFMHETGVTITYFTPTHFALLLEHSWETLHQCSQYRAALFAGERLPVRIARAFYDLQTPAVVYNTWSPSELVVQTTIHKVDKPDDDVFDIPIGRPLPNCRHYVVDAVLNPLPAGFVGEICVGGAQVGLEYLNRPLANATSFVRDLNSTPEDQARGWKKMFRTGDKGSFLPNGLLTFKGRIAGDKQIKLRGFRIDLGEVEQVLYKNASTPDGQGIVDISVIARDSEKSDATSPLTDERRLIAFVIPKKPLQSTQERDEYANYLHRMAQGSLNEYMCPNGYQFLERLPMTIGGKVDRRSLLTMKLDLAQHTTTCTDSRPVTEVAGDDAEILQGVTGQVCSLLGIDRSIAPNDNFFELGGQSILLLRLQSRLKKKFKVTLKLQELIHAPTPLAIAGMIQKQLKGPAGVQNENASKSIDWSEEISLPASLMNTDYSQLSRFPRTDVSSILLTGIDTFIGLHMLATILSNNHNATVYVIGIHDELTADHLVEGLTKYKLLDAHLSTEDVLSRTCAVPGKMTSPRFGLAEEAFRNLADKVRVIFNIAADVSLLKTYVDLKTVNTSAILTLIELATSSHGHLLEIHHLSTWSVPHLQTWKKTSRTRAFASNREEDPSHFTPPTADEYGYFKSRWAAEMYLTQAAARGVPVSIYRASSVSGSRATNVPVPEMDFISNMIMHMIQHRAIPEINSSSLIDEAGDFVVDFLPVDALTSSMYTLASEESAAAPGLQVYHLGSSQPLPLQALVDVIPSLDQSGAAGKCRVVPMQEWLRLVSEGASEEEQLHWMVVKKYFQHGHSMFALDKSHTVAALKKAGKEVEFPAIDVDYLKRLLDERGPGLKR.

The segment at 1 to 25 (MDTPLSSSEISPRFSNTVPSSVSSM) is disordered. Residues 29–441 (ADPSVIVGLA…GTNAHVILDA (413 aa)) enclose the Ketosynthase family 3 (KS3) domain. Catalysis depends on for beta-ketoacyl synthase activity residues C201, H324, and H362. The interval 555-868 (VFTGQGAQWF…PYLASLTRGV (314 aa)) is malonyl-CoA:ACP transacylase (MAT) domain. The active-site For malonyltransferase activity is S647. Residues 945 to 1080 (HSILGARMPG…GLVSVETNAL (136 aa)) are N-terminal hotdog fold. The segment at 945–1256 (HSILGARMPG…LEVTALGSDK (312 aa)) is dehydratase (DH) domain. One can recognise a PKS/mFAS DH domain in the interval 945-1258 (HSILGARMPG…VTALGSDKTD (314 aa)). The active-site Proton acceptor; for dehydratase activity is the H977. The interval 1100 to 1258 (QESIPAETLY…VTALGSDKTD (159 aa)) is C-terminal hotdog fold. Residue D1164 is the Proton donor; for dehydratase activity of the active site. The interval 1629 to 1945 (GLLETLVFED…MGKHTGKVVL (317 aa)) is enoyl reductase (ER) domain. Residues 1971–2143 (TYLLVGGLGG…AGTTMNCGMI (173 aa)) form a ketoreductase (KR) domain region. The Carrier 1 domain maps to 2251–2328 (ERTTLVLSAF…ALVTKASGLI (78 aa)). S2288 carries the O-(pantetheine 4'-phosphoryl)serine modification. The span at 2337–2350 (KAENVDNEGAKGNE) shows a compositional bias: basic and acidic residues. Residues 2337–2364 (KAENVDNEGAKGNEDQEVETQQGQLNQP) form a disordered region. Residues 2374–2816 (VPMSSFQQRL…AEVNLCGALE (443 aa)) are condensation (C) domain 7. The interval 2836–3248 (SVGVCQRIME…NGLLTFKGRI (413 aa)) is adenylation (A) domain 8. In terms of domain architecture, Carrier 2 spans 3391–3467 (GDDAEILQGV…AIAGMIQKQL (77 aa)). An O-(pantetheine 4'-phosphoryl)serine modification is found at S3427. Residues 3515–3774 (LTGIDTFIGL…VDFLPVDALT (260 aa)) form a thioesterase (TE) domain region.

In the C-terminal section; belongs to the NRP synthetase family.

The protein operates within secondary metabolite biosynthesis. Functionally, hybrid PKS-NRPS synthetase; part of the gene cluster that mediates the biosynthesis of pyranonigrins, a family of antioxidative compounds. The first step of pyranonigrins biosynthesis is performed by the hybrid PKS-NRPS synthetase that condenses 6 malonyl-CoA units to an acetyl starter unit, to form a 1,3,5-trioxotetradecane-6,8-dienyl-ACP. The enoyl reductase (ER) domain of pynA is likely to be functional during the first two rounds of polyketide chain extension, to generate the saturated C-C bonds of the alkyl side chain. PynA subsequently forms the amide bond between the acyl chain and L-serine. Although pynA has a terminal reductase domain, it appears to require the thioesterase pynI for the release of the straight-chain intermediate from pynA via the formation of a tetramic acid pyranonigrin J. The methyltransferase pynC then coverts pyranonigrin J to pyranonigrin I via N-methylation. The FAD-dependent monooxygenase pynG catalyzes an epoxidation-mediated cyclization to form the dihydro-gamma-pyrone moiety, followed by pynD-catalyzed oxidation of the alcohol to the ketone and enolization to yield the characteristic tetramic acid-fused gamma-pyrone core of pyranonigrin H. Pyranonigrin H is substrate of pynH for dehydration-mediated exo-methylene formation from the serine side chain to produce pyranonigrin E, before the oxidase pynE reduces the exo-methylene of pyranonigrin E into a pendant methyl to form pyranonigrin G. The FAD-linked oxidoreductase pynB performs the reverse reaction and converts pyranonigrin G back to pyranonigrin E. The polypeptide is Hybrid PKS-NRPS synthetase pynA (Aspergillus niger (strain ATCC MYA-4892 / CBS 513.88 / FGSC A1513)).